Here is a 5100-residue protein sequence, read N- to C-terminus: Hemicentin-2 (5100 aa).

The first 19 residues, 1–19, serve as a signal peptide directing secretion; that stretch reads MTPGAQLLPLLVAISTAVA. In terms of domain architecture, VWFA spans 37 to 211; it reads DATLAFVFDV…QVSEVLKWVE (175 aa). N-linked (GlcNAc...) asparagine glycans are attached at residues asparagine 330, asparagine 347, asparagine 380, asparagine 479, asparagine 526, asparagine 548, and asparagine 675. Ig-like C2-type domains lie at 426–515, 517–601, 609–692, 699–782, 787–877, 882–968, 973–1058, 1063–1156, 1161–1239, 1246–1335, 1340–1437, 1442–1531, 1536–1624, 1629–1717, 1722–1810, 1825–1913, 1920–2008, 2011–2100, 2105–2189, 2196–2285, 2290–2379, 2384–2473, 2478–2566, 2571–2662, 2667–2758, 2781–2871, 2875–2964, 2971–3058, 3063–3153, 3157–3245, 3250–3340, 3345–3432, 3438–3523, 3528–3609, 3614–3702, 3707–3793, 3798–3886, 3891–3977, 3982–4067, 4071–4158, 4163–4244, 4252–4336, and 4343–4428; these read PGVP…IVIT, PPPQ…RATT, PQVS…ETVT, PSVS…IQLV, PRLT…LVVT, PQIA…VELV, PRIH…MWLS, PMIK…YVLR, PQVQ…WKLE, PHWG…AKLV, PSIR…FNLA, PSLL…FQLS, PTIW…TSLE, PTIE…YSVE, PQLL…VEVS, SAHH…KDVT, PNIE…LRVN, PRIT…VILQ, PSIL…KHFN, PAFP…QSLE, PQVT…FALS, PHLT…FSVE, PSIE…TQLS, PTIL…YHVE, PSIS…QDFN, PHEE…YELL, PPVI…KLFT, PQIS…VQLN, PSFK…FVLA, PPTF…FVVS, PQIQ…HTVN, PTIK…RNFT, PPIL…FQLT, PHIE…FRVR, PNVV…FRVE, PTIQ…LDLR, PAIA…YQVT, PTIA…MVLT, PVVK…TRLV, PPVI…VHLT, PVLT…QAVS, PVLQ…KVVT, and PVFQ…ALLA. A disulfide bridge connects residues cysteine 449 and cysteine 497. 6 disulfide bridges follow: cysteine 539–cysteine 588, cysteine 630–cysteine 678, cysteine 720–cysteine 766, cysteine 808–cysteine 859, cysteine 903–cysteine 952, and cysteine 994–cysteine 1042. 3 positions are modified to omega-N-methylarginine: arginine 909, arginine 914, and arginine 915. Residues asparagine 1024 and asparagine 1068 are each glycosylated (N-linked (GlcNAc...) asparagine). Intrachain disulfides connect cysteine 1091-cysteine 1140 and cysteine 1182-cysteine 1225. An N-linked (GlcNAc...) asparagine glycan is attached at asparagine 1264. A disordered region spans residues 1265–1293; it reads ASLPCPAQGTPKPRITWRRGPSSEPLNGR. Residues cysteine 1269 and cysteine 1319 are joined by a disulfide bond. Asparagine 1350 is a glycosylation site (N-linked (GlcNAc...) asparagine). 2 disulfides stabilise this stretch: cysteine 1363-cysteine 1421 and cysteine 1465-cysteine 1515. N-linked (GlcNAc...) asparagine glycosylation is present at asparagine 1542. 4 disulfide bridges follow: cysteine 1559/cysteine 1608, cysteine 1653/cysteine 1701, cysteine 1745/cysteine 1794, and cysteine 1846/cysteine 1899. Residues asparagine 1676 and asparagine 1787 are each glycosylated (N-linked (GlcNAc...) asparagine). An N-linked (GlcNAc...) asparagine glycan is attached at asparagine 1934. 2 disulfides stabilise this stretch: cysteine 1941–cysteine 1990 and cysteine 2033–cysteine 2084. N-linked (GlcNAc...) asparagine glycans are attached at residues asparagine 2034, asparagine 2113, and asparagine 2119. Intrachain disulfides connect cysteine 2126/cysteine 2175 and cysteine 2218/cysteine 2269. N-linked (GlcNAc...) asparagine glycosylation is found at asparagine 2309, asparagine 2315, asparagine 2345, and asparagine 2395. A disulfide bridge links cysteine 2314 with cysteine 2363. Cysteine 2408 and cysteine 2457 are disulfide-bonded. 5 N-linked (GlcNAc...) asparagine glycosylation sites follow: asparagine 2469, asparagine 2502, asparagine 2541, asparagine 2606, and asparagine 2688. 2 disulfides stabilise this stretch: cysteine 2501/cysteine 2550 and cysteine 2597/cysteine 2646. 2 disulfide bridges follow: cysteine 2695–cysteine 2744 and cysteine 2806–cysteine 2855. An N-linked (GlcNAc...) asparagine glycan is attached at asparagine 2892. An intrachain disulfide couples cysteine 2901 to cysteine 2950. N-linked (GlcNAc...) asparagine glycosylation is present at asparagine 2986. Disulfide bonds link cysteine 2993–cysteine 3042, cysteine 3088–cysteine 3137, cysteine 3180–cysteine 3229, cysteine 3273–cysteine 3324, and cysteine 3369–cysteine 3418. Asparagine 3430 carries N-linked (GlcNAc...) asparagine glycosylation. Intrachain disulfides connect cysteine 3462–cysteine 3507, cysteine 3551–cysteine 3593, and cysteine 3637–cysteine 3686. N-linked (GlcNAc...) asparagine glycosylation is found at asparagine 3560 and asparagine 3575. Residues asparagine 3717 and asparagine 3721 are each glycosylated (N-linked (GlcNAc...) asparagine). Residues cysteine 3728 and cysteine 3777 are joined by a disulfide bond. The N-linked (GlcNAc...) asparagine glycan is linked to asparagine 3806. 7 disulfide bridges follow: cysteine 3819/cysteine 3870, cysteine 3912/cysteine 3961, cysteine 4003/cysteine 4051, cysteine 4093/cysteine 4142, cysteine 4184/cysteine 4231, cysteine 4274/cysteine 4322, and cysteine 4364/cysteine 4412. An N-linked (GlcNAc...) asparagine glycan is attached at asparagine 4304. Residues 4432–4654 form the Nidogen G2 beta-barrel domain; sequence EPRGSRGSMT…QTEENEVGCP (223 aa). N-linked (GlcNAc...) asparagine glycosylation is found at asparagine 4455 and asparagine 4601. The EGF-like 1; calcium-binding domain maps to 4668–4708; the sequence is DKDECSGGPSPCSHTCRNAPGHFSCSCPTGFSLAWDHRNCR. Disulfide bonds link cysteine 4672–cysteine 4683, cysteine 4679–cysteine 4692, cysteine 4694–cysteine 4707, cysteine 4713–cysteine 4726, cysteine 4720–cysteine 4735, cysteine 4739–cysteine 4752, cysteine 4758–cysteine 4771, cysteine 4765–cysteine 4780, cysteine 4801–cysteine 4812, cysteine 4808–cysteine 4821, and cysteine 4823–cysteine 4836. The 45-residue stretch at 4709–4753 folds into the EGF-like 2; calcium-binding domain; sequence DVDECAGNTHLCQEEQRCVNLLGSYNCLASCRPGFRVTADGSNCE. An EGF-like 3; calcium-binding domain is found at 4754–4789; the sequence is DVDECLEQLDECHYNQLCENTPGGHHCGCPRGYRQQ. An EGF-like 4; calcium-binding domain is found at 4797–4837; that stretch reads DINECLQLPTPCVYQCQNLQGSYRCLCPPGQTLLRDGRTCI. Residue asparagine 4845 is glycosylated (N-linked (GlcNAc...) asparagine). Residues 4904-4943 enclose the EGF-like 5; calcium-binding domain; that stretch reads DLDECRVRSLCQHACQNTEGSYYCLCPSGYRLLPSGKNCQ. Disulfide bonds link cysteine 4908–cysteine 4918, cysteine 4914–cysteine 4927, and cysteine 4929–cysteine 4942. Asparagine 5035 carries an N-linked (GlcNAc...) asparagine glycan.

In terms of processing, reported to be phosphorylated; however as this position is extracellular, the in vivo relevance is unsure. As to expression, in neonatal skin, localized in the pericellular space of basal epidermal keratinocytes (at protein level). In adult skin, restricted to basal keratinocytes of hair follicles and the interfollicular epidermis. Absent from the myotendinous junction but present in skeletal muscle (at protein level). Expressed in the pericellular extracellular matrix of epithelial cells in a number of tissues including embryonic trophectoderm and adult skin and tongue. Also present in the extracellular matrix of some, but not all, blood vessels. Expressed primarily in epithelial cells in the embryonic epidermis, lung, intestine, skeletal hindlimb muscle, tongue and the muscular layers of the esophagus.

It localises to the secreted. Its subcellular location is the extracellular space. It is found in the extracellular matrix. The protein resides in the cleavage furrow. This is Hemicentin-2 (Hmcn2) from Mus musculus (Mouse).